A 543-amino-acid chain; its full sequence is MAVSERRGLGRGSPAEWGQRLLLVLLLGGCSGRIHQLALTGEKRADIQLNSFGFYTNGSLEVELSVLRLGLREAEEKSLLVGFSLSRVRSGRVRSYSTRDFQDCPLQKNSSSFLVLFLINTKDLQVQVRKYGEQKTLFIFPGLLPEAPSKPGLPKPQATVPRKVDGGGTSAASKPKSTPAVIQGPSGKDKDLVLGLSHLNNSYNFSFHVVIGSQAEEGQYSLNFHNCNNSVPGKEHPFDITVMIREKNPDGFLSAAEMPLFKLYMVMSACFLAAGIFWVSILCRNTYSVFKIHWLMAALAFTKSISLLFHSINYYFINSQGHPIEGLAVMYYIAHLLKGALLFITIALIGSGWAFIKYVLSDKEKKVFGIVIPMQVLANVAYIIIESREEGASDYVLWKEILFLVDLICCGAILFPVVWSIRHLQDASGTDGKVAVNLAKLKLFRHYYVMVICYVYFTRIIAILLQVAVPFQWQWLYQLLVEGSTLAFFVLTGYKFQPTGNNPYLQLPQEDEEDVQMEQVMTDSGFREGLSKVNKTASGRELL.

The N-terminal stretch at 1–32 (MAVSERRGLGRGSPAEWGQRLLLVLLLGGCSG) is a signal peptide. N57 and N109 each carry an N-linked (GlcNAc...) asparagine glycan. The tract at residues 149-186 (SKPGLPKPQATVPRKVDGGGTSAASKPKSTPAVIQGPS) is disordered. 3 N-linked (GlcNAc...) asparagine glycosylation sites follow: N200, N204, and N228. The next 7 helical transmembrane spans lie at 263 to 283 (LYMV…SILC), 292 to 312 (IHWL…FHSI), 336 to 356 (LLKG…WAFI), 367 to 387 (VFGI…IIES), 401 to 421 (ILFL…VWSI), 449 to 469 (VMVI…QVAV), and 473 to 493 (WQWL…VLTG). N534 is a glycosylation site (N-linked (GlcNAc...) asparagine).

The protein belongs to the LU7TM family.

It localises to the golgi apparatus. It is found in the cis-Golgi network membrane. The protein localises to the trans-Golgi network membrane. Its subcellular location is the golgi apparatus membrane. Its function is as follows. May play a role in intracellular immune modulation by activating NF-kappaB response and attenuating Toll-like-receptor response. In terms of biological role, (Microbial infection) Plays an essential function in adeno-associated virus (AAV) transduction across multiple serotypes except AAV5. May play a critical role in mediating the endosomal virus escape or in the AAV virions trafficking from endosomes to the nucleus. The chain is Protein GPR108 from Homo sapiens (Human).